The primary structure comprises 347 residues: Protein RecA (347 aa).

ATP is bound at residue 66-73 (GPESSGKT).

The protein belongs to the RecA family.

Its subcellular location is the cytoplasm. Functionally, can catalyze the hydrolysis of ATP in the presence of single-stranded DNA, the ATP-dependent uptake of single-stranded DNA by duplex DNA, and the ATP-dependent hybridization of homologous single-stranded DNAs. It interacts with LexA causing its activation and leading to its autocatalytic cleavage. The chain is Protein RecA from Methylococcus capsulatus (strain ATCC 33009 / NCIMB 11132 / Bath).